A 344-amino-acid polypeptide reads, in one-letter code: MQLSDFTYNLPKQLIAQYPPKRRGESRLLSLEGASGIVKDRQFIELPELLSTKDLLIFNNTKVIPARIQGTKDSGGKIEILIERFLDQHRALAHIRANNPPRAGRRLVMEQSVEVEVKGRVKELFELRFLDPRPLPQLLEAIGQMPLPPYIQRKTVPVDKERYQTIYASRPGAVAAPTAGLHFDKPLLKRLQAQGIRSGYITLHVGAGTFQPVRVKNITQHQMHSEYVEVSEQICAQIRDTQQAGGRVVAVGTTTVRALEAASAKGVIAPYQGETEIFIFPGHRFHTVNALITNFHLPETTLLMLVCAFAGSEHVLAAYRHAIKKGYRFFSYGDAMFITEAKTG.

The protein belongs to the QueA family. Monomer.

The protein resides in the cytoplasm. The catalysed reaction is 7-aminomethyl-7-carbaguanosine(34) in tRNA + S-adenosyl-L-methionine = epoxyqueuosine(34) in tRNA + adenine + L-methionine + 2 H(+). The protein operates within tRNA modification; tRNA-queuosine biosynthesis. In terms of biological role, transfers and isomerizes the ribose moiety from AdoMet to the 7-aminomethyl group of 7-deazaguanine (preQ1-tRNA) to give epoxyqueuosine (oQ-tRNA). This is S-adenosylmethionine:tRNA ribosyltransferase-isomerase from Nitrosococcus oceani (strain ATCC 19707 / BCRC 17464 / JCM 30415 / NCIMB 11848 / C-107).